The following is a 73-amino-acid chain: Gastricsin (73 aa).

A propeptide spans 1-43 (activation peptide); sequence SVIKVPLKKLKSIRQAMKEKGLLEEFLKTHKYDPAQRYRIGDI. One can recognise a Peptidase A1 domain in the interval 57-73; the sequence is YFGEISIGTPPQNFLVL.

This sequence belongs to the peptidase A1 family.

It localises to the secreted. It catalyses the reaction More restricted specificity than pepsin A, but shows preferential cleavage at Tyr-|-Xaa bonds. High activity on hemoglobin.. Functionally, hydrolyzes a variety of proteins. The polypeptide is Gastricsin (PGC) (Sus scrofa (Pig)).